The primary structure comprises 216 residues: UPF0502 protein Pfl01_3711 (216 aa).

This sequence belongs to the UPF0502 family.

The chain is UPF0502 protein Pfl01_3711 from Pseudomonas fluorescens (strain Pf0-1).